Here is a 431-residue protein sequence, read N- to C-terminus: MANSC domain-containing protein 1 (431 aa).

Residues 1 to 26 (MFFGGEGSLTYTLVIICFLTLRLSAS) form the signal peptide. The Extracellular portion of the chain corresponds to 27 to 385 (QNCLKKSLED…QYGLPFEKWL (359 aa)). Residues 33–117 (SLEDVVIDIQ…LKPAKGLMSY (85 aa)) enclose the MANSC domain. 3 N-linked (GlcNAc...) asparagine glycosylation sites follow: Asn72, Asn222, and Asn251. The interval 234–277 (SPHTTSATPKPATLLPTNASVTPSGTSQPQLATTAPPVTTVTSQ) is disordered. The segment covering 248–261 (LPTNASVTPSGTSQ) has biased composition (polar residues). The span at 262–277 (PQLATTAPPVTTVTSQ) shows a compositional bias: low complexity. N-linked (GlcNAc...) asparagine glycans are attached at residues Asn327 and Asn352. The disordered stretch occupies residues 352 to 372 (NKTASWEGREASPGSSSQGSV). The helical transmembrane segment at 386–408 (LIGSLLFGVLFLVIGLVLLGRIL) threads the bilayer. Topologically, residues 409-431 (SESLRRKRYSRLDYLINGIYVDI) are cytoplasmic.

Widely expressed.

Its subcellular location is the membrane. This chain is MANSC domain-containing protein 1 (MANSC1), found in Homo sapiens (Human).